The sequence spans 485 residues: Elongation factor TuB, chloroplastic (485 aa).

The N-terminal 76 residues, 1–76 (MASISAASAT…TTHPRRFTVR (76 aa)), are a transit peptide targeting the chloroplast. Residues 86 to 290 (KPHVNIGTIG…NVDEYIPIPQ (205 aa)) enclose the tr-type G domain. The segment at 95–102 (GHVDHGKT) is G1. 95–102 (GHVDHGKT) provides a ligand contact to GTP. Positions 136–140 (GITIN) are G2. The G3 stretch occupies residues 157 to 160 (DCPG). GTP is bound by residues 157 to 161 (DCPGH) and 212 to 215 (NKQD). The G4 stretch occupies residues 212–215 (NKQD). Residues 250 to 252 (SAL) form a G5 region.

This sequence belongs to the TRAFAC class translation factor GTPase superfamily. Classic translation factor GTPase family. EF-Tu/EF-1A subfamily.

The protein localises to the plastid. It localises to the chloroplast. In terms of biological role, this protein promotes the GTP-dependent binding of aminoacyl-tRNA to the A-site of ribosomes during protein biosynthesis. The protein is Elongation factor TuB, chloroplastic (TUFB) of Nicotiana sylvestris (Wood tobacco).